Consider the following 375-residue polypeptide: G-protein coupled estrogen receptor 1 (375 aa).

Met-1 carries the post-translational modification N-acetylmethionine. Residues 1-62 (MDATTPAQTV…QQYVIALFLS (62 aa)) lie on the Extracellular side of the membrane. Asn-32 and Asn-44 each carry an N-linked (GlcNAc...) asparagine glycan. Residues 63–84 (CLYTIFLFPIGFVGNILILVVN) form a helical membrane-spanning segment. Topologically, residues 85 to 96 (ISFREKMTIPDL) are cytoplasmic. A helical transmembrane segment spans residues 97–120 (YFINLAAADLILVADSLIEVFNLD). Residues 121-132 (EQYYDIAVLCTF) are Extracellular-facing. Cysteines 130 and 207 form a disulfide. Residues 133-153 (MSLFLQINMYSSVFFLTWMSF) form a helical membrane-spanning segment. Residues 154–175 (DRYLALAKAMRCGLFRTKHHAR) lie on the Cytoplasmic side of the membrane. A helical transmembrane segment spans residues 176–194 (LSCGLIWMASVSATLVPFT). Topologically, residues 195-220 (AVHLRHTEEACFCFADVREVQWLEVT) are extracellular. A helical transmembrane segment spans residues 221–236 (LGFIMPFAIIGLCYSL). The Cytoplasmic segment spans residues 237-259 (IVRALIRAHRHRGLRPRRQKALR). The chain crosses the membrane as a helical span at residues 260-280 (MIFAVVLVFFICWLPENVFIS). Over 281 to 306 (VHLLQWTQPGDTPCKQSFRHAYPLTG) the chain is Extracellular. A helical transmembrane segment spans residues 307 to 327 (HIVNLAAFSNSCLNPLIYSFL). Over 328-375 (GETFRDKLRLYVEQKTSLPALNRFCHATLKAVIPDSTEQSEVRFSSAV) the chain is Cytoplasmic.

It belongs to the G-protein coupled receptor 1 family. As to quaternary structure, interacts with RAMP3; the interaction confers proper subcellular localization and function in cardioprotection. Interacts with KRT7 and KRT8. Interacts with EGFR; the interaction increases after agonist-induced stimulation in cancer-associated fibroblasts (CAF). Interacts with EGFR and ESR1. Interacts (via C-terminus tail motif) with DLG4 (via N-terminus tandem pair of PDZ domains); the interaction is direct and induces the increase of GPER1 protein levels residing at the plasma membrane surface in a estradiol-independent manner. Homodimer. Heterodimer; heterodimerizes with other G-protein-coupled receptor (GPCRs) like CRHR1, HTR1A and PAQR8. Ubiquitinated; ubiquitination occurs at the plasma membrane and leads to proteasome-mediated degradation. Post-translationally, N-glycosylated. As to expression, expressed in brain, heart, spleen, preadipocytes, mature adipocytes and primary hippocampal neurons. Expressed in neurons of the hippocampus, hypothalamic paraventricular nucleus (PVH), supraoptic nucleus (SON) and the median eminence. Expressed in the nucleus ambiguous (at protein level). Expressed in brain, pituitary gland, adrenal medulla, renal pelvis, ovary, endothelial cells, visceral fat tissues and islets of Langerhans.

It localises to the nucleus. It is found in the cytoplasm. Its subcellular location is the perinuclear region. The protein resides in the cytoskeleton. The protein localises to the cell membrane. It localises to the endoplasmic reticulum membrane. It is found in the golgi apparatus membrane. Its subcellular location is the cell projection. The protein resides in the dendrite. The protein localises to the cytoplasmic vesicle membrane. It localises to the early endosome. It is found in the recycling endosome. Its subcellular location is the golgi apparatus. The protein resides in the trans-Golgi network. The protein localises to the dendritic spine membrane. It localises to the axon. It is found in the postsynaptic density. Its subcellular location is the mitochondrion membrane. Its function is as follows. G-protein coupled estrogen receptor that binds to 17-beta-estradiol (E2) with high affinity, leading to rapid and transient activation of numerous intracellular signaling pathways. Stimulates cAMP production, calcium mobilization and tyrosine kinase Src inducing the release of heparin-bound epidermal growth factor (HB-EGF) and subsequent transactivation of the epidermal growth factor receptor (EGFR), activating downstream signaling pathways such as PI3K/Akt and ERK/MAPK. Mediates pleiotropic functions among others in the cardiovascular, endocrine, reproductive, immune and central nervous systems. Has a role in cardioprotection by reducing cardiac hypertrophy and perivascular fibrosis in a RAMP3-dependent manner. Regulates arterial blood pressure by stimulating vasodilation and reducing vascular smooth muscle and microvascular endothelial cell proliferation. Plays a role in blood glucose homeostasis contributing to the insulin secretion response by pancreatic beta cells. Triggers mitochondrial apoptosis during pachytene spermatocyte differentiation. Stimulates uterine epithelial cell proliferation. Enhances uterine contractility in response to oxytocin. Contributes to thymic atrophy by inducing apoptosis. Attenuates TNF-mediated endothelial expression of leukocyte adhesion molecules. Promotes neuritogenesis in developing hippocampal neurons. Plays a role in acute neuroprotection against NMDA-induced excitotoxic neuronal death. Increases firing activity and intracellular calcium oscillations in luteinizing hormone-releasing hormone (LHRH) neurons. Inhibits early osteoblast proliferation at growth plate during skeletal development. Inhibits mature adipocyte differentiation and lipid accumulation. Involved in the recruitment of beta-arrestin 2 ARRB2 at the plasma membrane in epithelial cells. Also functions as a receptor for aldosterone mediating rapid regulation of vascular contractibility through the PI3K/ERK signaling pathway. Involved in cancer progression regulation. Stimulates cancer-associated fibroblast (CAF) proliferation by a rapid genomic response through the EGFR/ERK transduction pathway. Associated with EGFR, may act as a transcription factor activating growth regulatory genes (c-fos, cyclin D1). Promotes integrin alpha-5/beta-1 and fibronectin (FN) matrix assembly in breast cancer cells. The sequence is that of G-protein coupled estrogen receptor 1 (Gper1) from Mus musculus (Mouse).